The primary structure comprises 115 residues: Large ribosomal subunit protein bL19 (115 aa).

It belongs to the bacterial ribosomal protein bL19 family.

This protein is located at the 30S-50S ribosomal subunit interface and may play a role in the structure and function of the aminoacyl-tRNA binding site. The chain is Large ribosomal subunit protein bL19 from Erwinia tasmaniensis (strain DSM 17950 / CFBP 7177 / CIP 109463 / NCPPB 4357 / Et1/99).